The primary structure comprises 291 residues: 3-hydroxy-5-phosphonooxypentane-2,4-dione thiolase (291 aa).

Residue Lys-203 is the Schiff-base intermediate with substrate of the active site.

Belongs to the DeoC/FbaB aldolase family. In terms of assembly, homodecamer.

It localises to the cytoplasm. The catalysed reaction is dihydroxyacetone phosphate + acetyl-CoA = 3-hydroxy-2,4-dioxopentyl phosphate + CoA. Involved in the degradation of phospho-AI-2, thereby terminating induction of the lsr operon and closing the AI-2 signaling cycle. Catalyzes the transfer of an acetyl moiety from 3-hydroxy-5-phosphonooxypentane-2,4-dione to CoA to form glycerone phosphate and acetyl-CoA. The sequence is that of 3-hydroxy-5-phosphonooxypentane-2,4-dione thiolase from Escherichia coli (strain K12 / DH10B).